The primary structure comprises 570 residues: Probable diguanylate cyclase DgcQ (570 aa).

2 consecutive transmembrane segments (helical) span residues 20–40 (FGPG…STLL) and 360–380 (IALT…WGVI). A GGDEF domain is found at 428–563 (QPFSVIQLDL…GRNRICASDA (136 aa)). A Mg(2+)-binding site is contributed by Asp436. 3 residues coordinate substrate: Asn444, His449, and Asp453. Glu479 is a binding site for Mg(2+). Glu479 (proton acceptor) is an active-site residue.

Homodimer. Mg(2+) is required as a cofactor.

It is found in the cell inner membrane. The enzyme catalyses 2 GTP = 3',3'-c-di-GMP + 2 diphosphate. Its pathway is glycan metabolism; bacterial cellulose biosynthesis. The protein operates within purine metabolism; 3',5'-cyclic di-GMP biosynthesis. Functionally, catalyzes the synthesis of cyclic-di-GMP (c-di-GMP) via the condensation of 2 GTP molecules. Cyclic-di-GMP is a second messenger which controls cell surface-associated traits in bacteria. Involved in the regulation of cellulose production. This Salmonella choleraesuis (strain SC-B67) protein is Probable diguanylate cyclase DgcQ.